We begin with the raw amino-acid sequence, 407 residues long: 1-deoxy-D-xylulose 5-phosphate reductoisomerase (407 aa).

6 residues coordinate NADPH: T25, G26, S27, I28, N53, and N136. A 1-deoxy-D-xylulose 5-phosphate-binding site is contributed by K137. E138 provides a ligand contact to NADPH. Mn(2+) is bound at residue D162. Positions 163, 164, 188, and 211 each coordinate 1-deoxy-D-xylulose 5-phosphate. Residue E164 participates in Mn(2+) binding. Residue G217 coordinates NADPH. 4 residues coordinate 1-deoxy-D-xylulose 5-phosphate: S224, N229, K230, and E233. A Mn(2+)-binding site is contributed by E233.

Belongs to the DXR family. It depends on Mg(2+) as a cofactor. The cofactor is Mn(2+).

It carries out the reaction 2-C-methyl-D-erythritol 4-phosphate + NADP(+) = 1-deoxy-D-xylulose 5-phosphate + NADPH + H(+). Its pathway is isoprenoid biosynthesis; isopentenyl diphosphate biosynthesis via DXP pathway; isopentenyl diphosphate from 1-deoxy-D-xylulose 5-phosphate: step 1/6. In terms of biological role, catalyzes the NADPH-dependent rearrangement and reduction of 1-deoxy-D-xylulose-5-phosphate (DXP) to 2-C-methyl-D-erythritol 4-phosphate (MEP). This is 1-deoxy-D-xylulose 5-phosphate reductoisomerase from Nitrobacter winogradskyi (strain ATCC 25391 / DSM 10237 / CIP 104748 / NCIMB 11846 / Nb-255).